A 48-amino-acid polypeptide reads, in one-letter code: Delta-actitoxin-Bcg1b (48 aa).

3 cysteine pairs are disulfide-bonded: Cys4-Cys45, Cys6-Cys35, and Cys28-Cys46.

It belongs to the sea anemone sodium channel inhibitory toxin family. Type I subfamily.

It localises to the secreted. The protein localises to the nematocyst. Binds to the sodium channels Nav1.1/SCN1A (EC(50)=165 nM), Nav1.5/SCN5A (EC(50)=103 nM) and Nav1.6/SCN8A (EC(50)=133 nM), thereby delaying their inactivation. Also inhibits Nav1.2/SCN2A, Nav1.3/SCN3A, and Nav1.4/SCN4A, but to a lesser extent. Inhibits Nav1.5 differently from isoforms Nav1.1 and Nav1.6. In Nav1.5 the effect consists in a right-shift of inactivation; whereas in both Nav1.1 and Nav1.6 the effect consists in an incomplete inactivation. This Bunodosoma cangicum (Sea anemone) protein is Delta-actitoxin-Bcg1b.